A 496-amino-acid polypeptide reads, in one-letter code: MEKYILSLDQGTTSTRAIVFNKAGEIVHIAQKEFRQYFPNPGWVEHNANEIWGSVLSVIASALSESGIEAGQIAGIGITNQRETTVVWDKHTGKPVYNAIVWQSRQSAEICQELKEKGYEETIREKTGLLIDPYFSGTKVKWILDHVEGAREKAENGDLLFGTIDSWLIWKMSGGKAHVTDYSNASRTLMFNIYDLKWDDELLDILGVPKSMLPEVKPSSHVYAETVDYHFFGKNIPIAGAAGDQQAALFGQACFEEGMVKNTYGTGCFMLMNTGEKAIKSEHGLLTTIAWGIDGKVEYALEGSVFVAGSAIQWLRDGLRMFKDAKESEKYAVRAESADGVYVVPAFVGLGTPYWDSDVRGAVFGLTRGTTKEHFIRATLEALAYQTKDVLDAMKEDSGIPVKTLRVDGGAVKNNFLMDFQGDILDVPVERPEINETTALGSAYLAGLAVGFWSDRSEIKDQWQLDKRFEPKMEEKERESLYNGWKKAVNAARAFK.

Position 12 (T12) interacts with ADP. Residues T12, T13, and S14 each coordinate ATP. Residue T12 participates in sn-glycerol 3-phosphate binding. R16 lines the ADP pocket. Residues R82, E83, and Y134 each contribute to the sn-glycerol 3-phosphate site. Glycerol-binding residues include R82, E83, and Y134. H230 bears the Phosphohistidine; by HPr mark. Sn-glycerol 3-phosphate is bound at residue D244. 2 residues coordinate glycerol: D244 and Q245. T266 and G309 together coordinate ADP. The ATP site is built by T266, G309, Q313, and G410. ADP contacts are provided by G410 and N414.

This sequence belongs to the FGGY kinase family. As to quaternary structure, homotetramer and homodimer (in equilibrium). In terms of processing, the phosphoenolpyruvate-dependent sugar phosphotransferase system (PTS), including enzyme I, and histidine-containing protein (HPr) are required for the phosphorylation, which leads to the activation of the enzyme.

The enzyme catalyses glycerol + ATP = sn-glycerol 3-phosphate + ADP + H(+). The protein operates within polyol metabolism; glycerol degradation via glycerol kinase pathway; sn-glycerol 3-phosphate from glycerol: step 1/1. With respect to regulation, activated by phosphorylation and inhibited by fructose 1,6-bisphosphate (FBP). Key enzyme in the regulation of glycerol uptake and metabolism. Catalyzes the phosphorylation of glycerol to yield sn-glycerol 3-phosphate. The polypeptide is Glycerol kinase (Bacillus licheniformis (strain ATCC 14580 / DSM 13 / JCM 2505 / CCUG 7422 / NBRC 12200 / NCIMB 9375 / NCTC 10341 / NRRL NRS-1264 / Gibson 46)).